The sequence spans 226 residues: Probable septum site-determining protein MinC (226 aa).

The protein belongs to the MinC family. As to quaternary structure, interacts with MinD and FtsZ.

In terms of biological role, cell division inhibitor that blocks the formation of polar Z ring septums. Rapidly oscillates between the poles of the cell to destabilize FtsZ filaments that have formed before they mature into polar Z rings. Prevents FtsZ polymerization. This chain is Probable septum site-determining protein MinC, found in Bacillus velezensis (strain DSM 23117 / BGSC 10A6 / LMG 26770 / FZB42) (Bacillus amyloliquefaciens subsp. plantarum).